The chain runs to 702 residues: Palmitoyltransferase AKR1 (702 aa).

The segment covering 1-40 (MSTDAELQTISGLSVASKSAPSTQTEGVTASGKVESTTNA) has biased composition (polar residues). Positions 1 to 51 (MSTDAELQTISGLSVASKSAPSTQTEGVTASGKVESTTNAEEATSDVEEEE) are disordered. Over 1–299 (MSTDAELQTI…TTNLLCFFTP (299 aa)) the chain is Cytoplasmic. ANK repeat units lie at residues 49–80 (EEEN…VLDT), 83–112 (DGVT…VVDA), 117–147 (LNGT…PLRS), 150–179 (QGYN…PVDC), 183–212 (NGRT…DVKI), and 216–245 (QGFL…DMYA). 2 helical membrane-spanning segments follow: residues 300–320 (FILI…FGII) and 321–341 (LTVA…LPSL). Over 342-354 (YNGHAALLKSPFQ) the chain is Cytoplasmic. Residues 355-375 (AGIFTGSAFWVTVKYLTSVLP) traverse the membrane as a helical segment. Over 376-379 (ATFA) the chain is Lumenal. Residues 380–400 (SHPILNFFFASIFGLAMYCFF) traverse the membrane as a helical segment. Over 401-479 (RCMSMDPGYI…WNAIGVRNHR (79 aa)) the chain is Cytoplasmic. One can recognise a DHHC domain in the interval 436–486 (HFCFVTYVRKPLRSKFCRQSKRVVARFDHFCPWVWNAIGVRNHRMFVLYVL). Cys466 serves as the catalytic S-palmitoyl cysteine intermediate. A helical membrane pass occupies residues 480–500 (MFVLYVLFLQIGIPLWLALNS). Topologically, residues 501–518 (AYFGELLEIKRWDPLEFY) are lumenal. The helical transmembrane segment at 519 to 539 (LVIWISLQLIWITFLSFVQIF) threads the bilayer. Topologically, residues 540 to 702 (QICRSLTTSE…GEALLAESQV (163 aa)) are cytoplasmic. The disordered stretch occupies residues 679 to 702 (PNQQQTNNRSTREDGEALLAESQV).

Belongs to the DHHC palmitoyltransferase family. AKR/ZDHHC17 subfamily.

It is found in the early endosome membrane. The protein resides in the golgi apparatus membrane. It catalyses the reaction L-cysteinyl-[protein] + hexadecanoyl-CoA = S-hexadecanoyl-L-cysteinyl-[protein] + CoA. Palmitoyltransferase specific for casein kinase 1. The polypeptide is Palmitoyltransferase AKR1 (AKR1) (Yarrowia lipolytica (strain CLIB 122 / E 150) (Yeast)).